Reading from the N-terminus, the 550-residue chain is Hydroxylamine reductase (550 aa).

Positions 3, 6, 18, and 25 each coordinate [2Fe-2S] cluster. Residues His-249, Glu-273, Cys-317, Cys-405, Cys-433, Cys-458, Glu-492, and Lys-494 each contribute to the hybrid [4Fe-2O-2S] cluster site. Cys-405 carries the post-translational modification Cysteine persulfide.

This sequence belongs to the HCP family. [2Fe-2S] cluster serves as cofactor. The cofactor is hybrid [4Fe-2O-2S] cluster.

It is found in the cytoplasm. The enzyme catalyses A + NH4(+) + H2O = hydroxylamine + AH2 + H(+). Functionally, catalyzes the reduction of hydroxylamine to form NH(3) and H(2)O. In Salmonella paratyphi A (strain ATCC 9150 / SARB42), this protein is Hydroxylamine reductase.